Consider the following 960-residue polypeptide: CWF19-like protein 2 (960 aa).

Disordered regions lie at residues 1 to 222, 261 to 552, 624 to 648, and 712 to 731; these read MAAY…AGVV, EFQK…ELIL, AWPVNAPSETLEPRGGRRKRKAIET, and AQKERAGRDEERQRNKAVQE. Residues 13-101 adopt a coiled-coil conformation; that stretch reads SIKSRKESKR…KKAKKEKKDE (89 aa). The span at 16-52 shows a compositional bias: basic and acidic residues; that stretch reads SRKESKREERERVIQKAKEKFEKEERRKAERKARGED. Over residues 73 to 96 the composition is skewed to basic residues; the sequence is KTKKAKKEKKAKKSKKEKKKKAKK. The segment covering 108–117 has biased composition (acidic residues); that stretch reads SSEDSEDEWV. A compositionally biased stretch (low complexity) spans 135-146; that stretch reads EATPSSSSASNN. The stretch at 163 to 279 forms a coiled coil; it reads SVADRRAQKE…EDAAYGERRD (117 aa). Basic and acidic residues-rich tracts occupy residues 165–181, 261–372, and 404–417; these read ADRRAQKEAEKEAERQK, EFQK…DDLS, and KPVDDVEMSREAGF. Over residues 507–518 the composition is skewed to polar residues; the sequence is SAVQDSETPTLQ. A coiled-coil region spans residues 540-605; the sequence is SESEEEEEEE…IKDQSKRASK (66 aa). The span at 541-552 shows a compositional bias: acidic residues; that stretch reads ESEEEEEEELIL. The span at 713-731 shows a compositional bias: basic and acidic residues; that stretch reads QKERAGRDEERQRNKAVQE.

The protein belongs to the CWF19 family.

This chain is CWF19-like protein 2 (cwf19l2), found in Danio rerio (Zebrafish).